The sequence spans 732 residues: Segment polarity protein dishevelled homolog DVL-2 (732 aa).

In terms of domain architecture, DIX spans 1–82 (MAETKVIYHL…RVVSWLVSSE (82 aa)). Disordered stretches follow at residues 81 to 181 (SETS…SSST) and 195 to 237 (EEDD…SSFS). Positions 98 to 111 (DPPPVPPPVPPPPA) are enriched in pro residues. Basic and acidic residues predominate over residues 146-157 (MRRDRVRRRDST). The span at 202 to 213 (RFSSSTEQSSAS) shows a compositional bias: polar residues. A compositionally biased stretch (basic residues) spans 215-227 (LLKRHRRRRKQRP). Residues 250–335 (TVTLNMEKYN…KPGPIILTVA (86 aa)) form the PDZ domain. In terms of domain architecture, DEP spans 424–498 (PESGLEVRDR…SEQCYYIFGD (75 aa)). Composition is skewed to low complexity over residues 570–589 (MGSA…SNRS), 612–629 (KSGS…SIRR), and 637–647 (PPSERSTSSRP). The interval 570–660 (MGSAGSQHSE…HPPSVHSYAA (91 aa)) is disordered.

Belongs to the DSH family. Can form homomultimers. Interacts with prickle1. Interacts (via the PDZ domain) with ccdc88c/dal and dact1-B/dpr. Interacts (via the DIX domain) with ARP/Axin-related protein and dact1-A/frodo. Interacts with sdc4, possibly via fz7. Interacts directly (via the DEP domain) with efnb1/ephrin-B1. May interact indirectly with the phosphorylated ephrin receptors ephb1 and ephb2 via SH domain-containing adapters. Post-translationally, phosphorylated. Phosphorylation is controlled by frizzled proteins, correlates with the onset of embryo dorsalizing events and is higher in the dorsal half of early cleavage embryos. Phosphorylated on tyrosine residues in response to association with efnb1/ephrin-B1.

The protein resides in the cytoplasm. It localises to the cytoplasmic vesicle. It is found in the cell projection. Its subcellular location is the cilium. The protein localises to the nucleus. The protein resides in the cell membrane. Its function is as follows. Involved in at least 2 independent signaling cascades, controlling cell fate via canonical Wnt signaling and cell polarity via a planar cell polarity (PCP) cascade. Acts synergistically with dal/dapple-like to activate Wnt signaling, stabilizing ctnnb1/beta-catenin and leading to dorsal axis formation. Also prevents degradation of ctnnb1/beta-catenin by displacing gsk3 from a complex with ARP/Axin-related protein. Has an additional role in anterior-posterior (A/P) axis formation, specifying different neuroectodermal cell fates along the A/P axis in a dose-dependent manner by activating several early patterning genes. In the PCP pathway, required at the cell membrane for PCP-mediated neural and mesodermal convergent extension during gastrulation and subsequent neural tube closure, acting to activate jnk. Also involved in blastopore closure and archenteron elongation during early, but not late, gastrulation. Associates with ephrin receptors and ligands and acts as part of a downstream PCP pathway to mediate ephrin-mediated cell repulsion via activation of rhoa. Required for efnb1/ephrin-B1-driven movement of non-retinal progenitor cells into the retina during eye field formation. Patterns the hindbrain. Required for ciliogenesis. Controls the docking of basal bodies to the apical plasma membrane; mediates the activation, but not localization of rhoa at the apical surface of ciliated cells during basal body docking. Furthermore, required for the association of basal bodies with membrane-bound vesicles and the vesicle-trafficking protein exoc4/sec8, and this association is in turn required for basal body docking. Once basal bodies are docked, required for the planar polarization of basal bodies that underlies ciliary beating and the directional fluid flow across ciliated epithelia. The polypeptide is Segment polarity protein dishevelled homolog DVL-2 (Xenopus tropicalis (Western clawed frog)).